The chain runs to 267 residues: tRNA-cytidine(32) 2-sulfurtransferase 2 (267 aa).

Positions 42-47 (SGGKDS) match the PP-loop motif motif. [4Fe-4S] cluster-binding residues include Cys-117, Cys-120, and Cys-208.

Belongs to the TtcA family. Homodimer. The cofactor is Mg(2+). It depends on [4Fe-4S] cluster as a cofactor.

It is found in the cytoplasm. It catalyses the reaction cytidine(32) in tRNA + S-sulfanyl-L-cysteinyl-[cysteine desulfurase] + AH2 + ATP = 2-thiocytidine(32) in tRNA + L-cysteinyl-[cysteine desulfurase] + A + AMP + diphosphate + H(+). The protein operates within tRNA modification. Its function is as follows. Catalyzes the ATP-dependent 2-thiolation of cytidine in position 32 of tRNA, to form 2-thiocytidine (s(2)C32). The sulfur atoms are provided by the cysteine/cysteine desulfurase (IscS) system. This chain is tRNA-cytidine(32) 2-sulfurtransferase 2, found in Francisella tularensis subsp. holarctica (strain FTNF002-00 / FTA).